A 64-amino-acid chain; its full sequence is MKTSLSSLQRGLSEIFAFAYRNYALTKNEFYAIFEMLFWPLVSLISVGLLGEFLYLDREAVASY.

A helical transmembrane segment spans residues 30–52 (FYAIFEMLFWPLVSLISVGLLGE).

It localises to the membrane. This is an uncharacterized protein from Archaeoglobus fulgidus (strain ATCC 49558 / DSM 4304 / JCM 9628 / NBRC 100126 / VC-16).